Reading from the N-terminus, the 448-residue chain is Glucose-6-phosphate isomerase (448 aa).

E291 (proton donor) is an active-site residue. Active-site residues include H312 and K425.

This sequence belongs to the GPI family.

The protein resides in the cytoplasm. The enzyme catalyses alpha-D-glucose 6-phosphate = beta-D-fructose 6-phosphate. It participates in carbohydrate biosynthesis; gluconeogenesis. It functions in the pathway carbohydrate degradation; glycolysis; D-glyceraldehyde 3-phosphate and glycerone phosphate from D-glucose: step 2/4. Its function is as follows. Catalyzes the reversible isomerization of glucose-6-phosphate to fructose-6-phosphate. The polypeptide is Glucose-6-phosphate isomerase (Symbiobacterium thermophilum (strain DSM 24528 / JCM 14929 / IAM 14863 / T)).